We begin with the raw amino-acid sequence, 143 residues long: Large ribosomal subunit protein uL15 (143 aa).

Residues 1 to 45 (MLLNTVQPGVGAKHAKRRVGRGIGSGLGKTCGRGHKGQKSRAGGF) are disordered. Over residues 21-31 (RGIGSGLGKTC) the composition is skewed to gly residues.

This sequence belongs to the universal ribosomal protein uL15 family. Part of the 50S ribosomal subunit.

Functionally, binds to the 23S rRNA. The sequence is that of Large ribosomal subunit protein uL15 from Chromobacterium violaceum (strain ATCC 12472 / DSM 30191 / JCM 1249 / CCUG 213 / NBRC 12614 / NCIMB 9131 / NCTC 9757 / MK).